The primary structure comprises 132 residues: Small ribosomal subunit protein uS8 (132 aa).

It belongs to the universal ribosomal protein uS8 family. In terms of assembly, part of the 30S ribosomal subunit. Contacts proteins S5 and S12.

One of the primary rRNA binding proteins, it binds directly to 16S rRNA central domain where it helps coordinate assembly of the platform of the 30S subunit. The protein is Small ribosomal subunit protein uS8 of Desulforamulus reducens (strain ATCC BAA-1160 / DSM 100696 / MI-1) (Desulfotomaculum reducens).